A 438-amino-acid chain; its full sequence is Thymidine phosphorylase (438 aa).

Belongs to the thymidine/pyrimidine-nucleoside phosphorylase family. Homodimer.

It carries out the reaction thymidine + phosphate = 2-deoxy-alpha-D-ribose 1-phosphate + thymine. It participates in pyrimidine metabolism; dTMP biosynthesis via salvage pathway; dTMP from thymine: step 1/2. In terms of biological role, the enzymes which catalyze the reversible phosphorolysis of pyrimidine nucleosides are involved in the degradation of these compounds and in their utilization as carbon and energy sources, or in the rescue of pyrimidine bases for nucleotide synthesis. This Sinorhizobium medicae (strain WSM419) (Ensifer medicae) protein is Thymidine phosphorylase.